Reading from the N-terminus, the 521-residue chain is GMP synthase [glutamine-hydrolyzing] (521 aa).

A Glutamine amidotransferase type-1 domain is found at K8 to L203. Catalysis depends on C85, which acts as the Nucleophile. Residues H177 and E179 contribute to the active site. A GMPS ATP-PPase domain is found at W204–R396. S231–S237 provides a ligand contact to ATP.

Homodimer.

The catalysed reaction is XMP + L-glutamine + ATP + H2O = GMP + L-glutamate + AMP + diphosphate + 2 H(+). Its pathway is purine metabolism; GMP biosynthesis; GMP from XMP (L-Gln route): step 1/1. Functionally, catalyzes the synthesis of GMP from XMP. The protein is GMP synthase [glutamine-hydrolyzing] of Stenotrophomonas maltophilia (strain K279a).